Reading from the N-terminus, the 507-residue chain is Histidine ammonia-lyase (507 aa).

The segment at residues 141-143 (ASG) is a cross-link (5-imidazolinone (Ala-Gly)). Serine 142 is modified (2,3-didehydroalanine (Ser)).

The protein belongs to the PAL/histidase family. Contains an active site 4-methylidene-imidazol-5-one (MIO), which is formed autocatalytically by cyclization and dehydration of residues Ala-Ser-Gly.

Its subcellular location is the cytoplasm. It catalyses the reaction L-histidine = trans-urocanate + NH4(+). It participates in amino-acid degradation; L-histidine degradation into L-glutamate; N-formimidoyl-L-glutamate from L-histidine: step 1/3. This chain is Histidine ammonia-lyase, found in Burkholderia cenocepacia (strain HI2424).